The primary structure comprises 204 residues: Superoxide dismutase [Mn] (204 aa).

Residues His29, His84, Asp167, and His171 each contribute to the Mn(2+) site.

This sequence belongs to the iron/manganese superoxide dismutase family. As to quaternary structure, homotetramer. Mn(2+) is required as a cofactor.

The enzyme catalyses 2 superoxide + 2 H(+) = H2O2 + O2. Its function is as follows. Destroys superoxide anion radicals which are normally produced within the cells and which are toxic to biological systems. The polypeptide is Superoxide dismutase [Mn] (sodA) (Thermus thermophilus (strain ATCC BAA-163 / DSM 7039 / HB27)).